Here is a 438-residue protein sequence, read N- to C-terminus: Xylose isomerase (438 aa).

Residues His-100 and Asp-103 contribute to the active site. Mg(2+) contacts are provided by Glu-231, Glu-267, His-270, Asp-295, Asp-306, Asp-308, and Asp-338.

This sequence belongs to the xylose isomerase family. In terms of assembly, homotetramer. Requires Mg(2+) as cofactor.

It is found in the cytoplasm. It catalyses the reaction alpha-D-xylose = alpha-D-xylulofuranose. The sequence is that of Xylose isomerase (xylA) from Thermoanaerobacter pseudethanolicus (strain ATCC 33223 / 39E) (Clostridium thermohydrosulfuricum).